The sequence spans 307 residues: L-lactate dehydrogenase (307 aa).

Residues Val-13, Asp-34, Arg-39, Tyr-64, and 78-79 each bind NAD(+); that span reads GV. Residue Arg-87 coordinates substrate. Ser-100 contacts NAD(+). 119–122 serves as a coordination point for substrate; it reads NPVD. NAD(+) is bound at residue Thr-142. Position 147 to 150 (147 to 150) interacts with substrate; it reads DSAR. His-174 serves as the catalytic Proton acceptor. Residue Thr-224 coordinates substrate.

Belongs to the LDH/MDH superfamily. LDH family. In terms of assembly, homotetramer.

The protein localises to the cytoplasm. It catalyses the reaction (S)-lactate + NAD(+) = pyruvate + NADH + H(+). Its pathway is fermentation; pyruvate fermentation to lactate; (S)-lactate from pyruvate: step 1/1. Catalyzes the conversion of lactate to pyruvate. This Lactobacillus delbrueckii subsp. bulgaricus (strain ATCC BAA-365 / Lb-18) protein is L-lactate dehydrogenase.